A 399-amino-acid chain; its full sequence is O-antigen polymerase (399 aa).

The next 10 membrane-spanning stretches (helical) occupy residues 4 to 24 (FPPG…LVLV), 37 to 57 (LVFT…LTIF), 64 to 84 (AIMG…LVIL), 97 to 117 (IVCY…IDVL), 151 to 171 (GGFS…LLCM), 185 to 205 (IISF…AILV), 222 to 242 (FCGI…TNIF), 309 to 329 (FFWI…IYLA), 353 to 373 (LYFL…APSS), and 374 to 394 (STFS…KLTN).

It localises to the cell inner membrane. The enzyme catalyses n lipid-linked O-antigen repeat units = a lipid-linked O antigen + (n-1) polyisoprenyl diphosphate.. Its pathway is bacterial outer membrane biogenesis; LPS O-antigen biosynthesis. Functionally, polymerase involved in the biosynthesis of the lipopolysaccharide (LPS). Catalyzes the polymerization of the O-antigen repeat units on the periplasmic face of the inner membrane, leading to the formation of the lipid-linked O-antigen molecule. The sequence is that of O-antigen polymerase from Salmonella muenchen.